We begin with the raw amino-acid sequence, 372 residues long: 3-isopropylmalate dehydrogenase (372 aa).

79-90 is a binding site for NAD(+); sequence GPKWQGGAVRPE. Positions 97, 107, 136, and 225 each coordinate substrate. Residues aspartate 225, aspartate 250, and aspartate 254 each coordinate Mg(2+). 289 to 300 is a binding site for NAD(+); the sequence is GSAPDLPAGKAN.

It belongs to the isocitrate and isopropylmalate dehydrogenases family. As to quaternary structure, homodimer. Mg(2+) serves as cofactor. Requires Mn(2+) as cofactor.

The protein localises to the cytoplasm. The enzyme catalyses (2R,3S)-3-isopropylmalate + NAD(+) = 4-methyl-2-oxopentanoate + CO2 + NADH. It participates in amino-acid biosynthesis; L-leucine biosynthesis; L-leucine from 3-methyl-2-oxobutanoate: step 3/4. Its function is as follows. Catalyzes the oxidation of 3-carboxy-2-hydroxy-4-methylpentanoate (3-isopropylmalate) to 3-carboxy-4-methyl-2-oxopentanoate. The product decarboxylates to 4-methyl-2 oxopentanoate. This chain is 3-isopropylmalate dehydrogenase (LEU2), found in Eremothecium gossypii (strain ATCC 10895 / CBS 109.51 / FGSC 9923 / NRRL Y-1056) (Yeast).